A 222-amino-acid polypeptide reads, in one-letter code: Cysteine protease inhibitor 9 (222 aa).

The first 26 residues, 1–26 (MKSINILSFLLLSSTLSLVAFARSFS), serve as a signal peptide directing secretion. Positions 27-42 (SENPIVLPSTCHDDDN) are excised as a propeptide. The short motif at 29–34 (NPIVLP) is the Vacuolar targeting signal element. 2 disulfides stabilise this stretch: Cys84–Cys136 and Cys185–Cys191.

It belongs to the protease inhibitor I3 (leguminous Kunitz-type inhibitor) family. As to expression, tuber.

The protein resides in the vacuole. Putative inhibitor of cysteine proteases. Does not inhibit papain. May protect the plant by inhibiting proteases of invading organisms. In Solanum tuberosum (Potato), this protein is Cysteine protease inhibitor 9.